The sequence spans 588 residues: WD repeat-containing protein DDB_G0349043 (588 aa).

Residues 1 to 32 (MPLDNKVQLNENGKEVNNNNNNDEDLKIQDNH) form a disordered region. The 33-residue stretch at 40-72 (NRSELVRLLIQSLNSLGYDKSAEFLEKDSGISL) folds into the LisH domain. The region spanning 73–129 (QSKEINQFSECVVSGDWNKVEELLPFLKLNEFDTNNVKFLVYSQKFLEYLENHKIKE) is the CTLH domain. 3 WD repeats span residues 244–283 (KHRDEIWFITFSHDGQRLASSSKDNTIIIWDMSTIYLDQP), 294–333 (GHTKEVSHLSWSPNDKYLLSASNDSTVKLWNTNDGTLLKT), and 336–375 (KHSDAVTCCGWHPDNKRFVSGGNDKNIYLWSIENLDLTNS). The segment at 376 to 403 (NNNNNNHNNNNSNINGNSINGSNNNGNN) is disordered. WD repeat units follow at residues 413-452 (WACARVNDLSIHKDGKQLIIICQEKKLRIYDLENEKTPEV), 455-494 (METDAITSMELSNDCNFALVNTSNQEIHLWDLEKQIIVQK), 499-539 (KQGR…LLET), and 542-582 (RHSG…NSFI).

In Dictyostelium discoideum (Social amoeba), this protein is WD repeat-containing protein DDB_G0349043.